The primary structure comprises 2399 residues: Norsolorinic acid synthase (2399 aa).

The interval 10-247 (LVFGDQTYDF…RQIPIYVPAH (238 aa)) is starter unit:ACP transacylase (SAT) domain. Residues 372-805 (KSKLAIVSMS…GGNTALLIED (434 aa)) form the Ketosynthase family 3 (KS3) domain. Catalysis depends on for beta-ketoacyl synthase activity residues Cys544, His679, and His722. A malonyl-CoA:ACP transacylase (MAT) domain region spans residues 905-1192 (FAFTGQGSQY…LCGMIKNILG (288 aa)). The active-site For acyl/malonyl transferase activity is Ser995. The segment at 1307–1327 (VQEAPAAKTETKKMSKLDPTK) is disordered. A compositionally biased stretch (basic and acidic residues) spans 1315–1327 (TETKKMSKLDPTK). Residues 1340–1483 (HKVIEEKTEP…CTVRFTTDSQ (144 aa)) form an N-terminal hotdog fold region. In terms of domain architecture, PKS/mFAS DH spans 1340–1658 (HKVIEEKTEP…LRSVPRKALR (319 aa)). The interval 1353-1658 (QFTVETDISR…LRSVPRKALR (306 aa)) is product template (PT) domain. His1372 (proton acceptor; for dehydratase activity) is an active-site residue. Residues 1510–1658 (LTHYNTKSGY…LRSVPRKALR (149 aa)) form a C-terminal hotdog fold region. Asp1570 (proton donor; for dehydratase activity) is an active-site residue. The segment at 1665–1734 (MDKGIRQRGG…AALKASVPKA (70 aa)) is disordered. Low complexity predominate over residues 1677 to 1698 (GAAKGAVAAPAPAKKMVEPVKA). Residues 1708-1723 (AAPPSPSKAAPPPAPK) are compositionally biased toward pro residues. Over residues 1724–1734 (PAALKASVPKA) the composition is skewed to low complexity. Carrier domains lie at 1733 to 1812 (KADP…AGAA), 1877 to 1953 (SKVF…GGSG), and 2020 to 2099 (VART…TGSS). O-(pantetheine 4'-phosphoryl)serine occurs at positions 1770, 1911, and 2057. Positions 2098–2115 (SSADSDSSSVASNPADPA) are enriched in low complexity. Positions 2098–2149 (SSADSDSSSVASNPADPAATPPRSESSDTEPDDEAPSKPKSGPGSTDSCRST) are disordered. The segment covering 2140-2149 (PGSTDSCRST) has biased composition (polar residues). The interval 2164–2393 (TLFLLPDGGG…KARVNYVSDL (230 aa)) is thioesterase/Claisen cyclase (TE/CLC) domain. Catalysis depends on Ser2234, which acts as the For thioesterase activity.

Pantetheine 4'-phosphate serves as cofactor.

It catalyses the reaction hexanoyl-[ACP] + 7 malonyl-CoA + 6 H(+) = noranthrone + holo-[ACP] + 7 CO2 + 7 CoA + 2 H2O. It functions in the pathway mycotoxin biosynthesis. Its function is as follows. Polyketide synthase; part of the fragmented gene cluster that mediates the biosynthesis of dothistromin (DOTH), a polyketide toxin very similar in structure to the aflatoxin precursor, versicolorin B. The first step of the pathway is the conversion of acetate to norsolorinic acid (NOR) and requires the fatty acid synthase subunits hexA and hexB, as well as the polyketide synthase pksA. PksA combines a hexanoyl starter unit and 7 malonyl-CoA extender units to synthesize the precursor NOR. The hexanoyl starter unit is provided to the acyl-carrier protein (ACP) domain by the fungal fatty acid synthase hexA/hexB. The second step is the conversion of NOR to averantin (AVN) and requires the norsolorinic acid ketoreductase nor1, which catalyzes the dehydration of norsolorinic acid to form (1'S)-averantin. The cytochrome P450 monooxygenase avnA then catalyzes the hydroxylation of AVN to 5'hydroxyaverantin (HAVN). The next step is performed by adhA that transforms HAVN to averufin (AVF). Averufin might then be converted to hydroxyversicolorone by cypX and avfA. Hydroxyversicolorone is further converted versiconal hemiacetal acetate (VHA) by moxY. VHA is then the substrate for the versiconal hemiacetal acetate esterase est1 to yield versiconal (VAL). Versicolorin B synthase vbsA then converts VAL to versicolorin B (VERB) by closing the bisfuran ring. Then, the activity of the versicolorin B desaturase verB leads to versicolorin A (VERA). DotB, a predicted chloroperoxidase, may perform epoxidation of the A-ring of VERA. Alternatively, a cytochrome P450, such as cypX or avnA could catalyze this step. It is also possible that another, uncharacterized, cytochrome P450 enzyme is responsible for this step. Opening of the epoxide could potentially be achieved by the epoxide hydrolase epoA. However, epoA seems not to be required for DOTH biosynthesis, but other epoxide hydrolases may have the ability to complement this hydrolysis. Alternatively, opening of the epoxide ring could be achieved non-enzymatically. The next step is the deoxygenation of ring A to yield the 5,8-dihydroxyanthraquinone which is most likely catalyzed by the NADPH dehydrogenase encoded by ver1. The last stages of DOTH biosynthesis are proposed to involve hydroxylation of the bisfuran. OrdB and norB might have oxidative roles here. An alternative possibility is that cytochrome P450 monoogenases such as avnA and cypX might perform these steps in addition to previously proposed steps. This Dothistroma septosporum (Red band needle blight fungus) protein is Norsolorinic acid synthase.